A 633-amino-acid chain; its full sequence is Pentatricopeptide repeat-containing protein At3g24000, mitochondrial (633 aa).

The transit peptide at 1–63 (MALRFPPRLL…SYIPADRRFY (63 aa)) directs the protein to the mitochondrion. 10 PPR repeats span residues 94-124 (DIVMGNTLLNMYAKCGSLEEARKVFEKMPQR), 125-159 (DFVTWTTLISGYSQHDRPCDALLFFNQMLRFGYSP), 160-194 (NEFTLSSVIKAAAAERRGCCGHQLHGFCVKCGFDS), 195-225 (NVHVGSALLDLYTRYGLMDDAQLVFDALESR), 226-260 (NDVSWNALIAGHARRSGTEKALELFQGMLRDGFRP), 261-295 (SHFSYASLFGACSSTGFLEQGKWVHAYMIKSGEKL), 296-326 (VAFAGNTLLDMYAKSGSIHDARKIFDRLAKR), 327-361 (DVVSWNSLLTAYAQHGFGKEAVWWFEEMRRVGIRP), 362-396 (NEISFLSVLTACSHSGLLDEGWHYYELMKKDGIVP), and 397-431 (EAWHYVTVVDLLGRAGDLNRALRFIEEMPIEPTAA). The interval 432-507 (IWKALLNACR…EPACSWVEIE (76 aa)) is type E motif. A type E(+) motif region spans residues 508-538 (NAIHMFVANDERHPQREEIARKWEEVLAKIK). Residues 539–633 (ELGYVPDTSH…DGNCSCKDYW (95 aa)) form a type DYW motif region.

This sequence belongs to the PPR family. PCMP-H subfamily.

The protein resides in the mitochondrion. In Arabidopsis thaliana (Mouse-ear cress), this protein is Pentatricopeptide repeat-containing protein At3g24000, mitochondrial (PCMP-H87).